A 268-amino-acid polypeptide reads, in one-letter code: Tryptophan synthase alpha chain (268 aa).

Active-site proton acceptor residues include E49 and D60.

This sequence belongs to the TrpA family. Tetramer of two alpha and two beta chains.

The enzyme catalyses (1S,2R)-1-C-(indol-3-yl)glycerol 3-phosphate + L-serine = D-glyceraldehyde 3-phosphate + L-tryptophan + H2O. It participates in amino-acid biosynthesis; L-tryptophan biosynthesis; L-tryptophan from chorismate: step 5/5. Its function is as follows. The alpha subunit is responsible for the aldol cleavage of indoleglycerol phosphate to indole and glyceraldehyde 3-phosphate. This is Tryptophan synthase alpha chain from Escherichia coli O7:K1 (strain IAI39 / ExPEC).